A 466-amino-acid chain; its full sequence is Protein hob1 (466 aa).

The BAR domain occupies 17 to 269 (LRSKFNVGEI…RGDVKDRAEA (253 aa)). Coiled coils occupy residues 31–67 (IYEDAGRRFKSLETEAKKLAEDAKKYTDAINGLLNHQ) and 177–204 (EKKLYEAETAFEQSSQEYEYYNEMLKEE). Residues 280-342 (PTYKRPGMGP…ASDYSTPSAG (63 aa)) form a disordered region. Positions 294-303 (ATASSSSSFS) are enriched in low complexity. Phosphoserine occurs at positions 298, 299, 301, and 303. An SH3 domain is found at 407–466 (PAAEHVVALYDYAAQAAGDLSFHAGDRIEVVSRTDNQNEWWIGRLNGAQGQFPGNYVQLE).

Functionally, has a role in DNA damage signaling as a part of stress response processes. The polypeptide is Protein hob1 (hob1) (Schizosaccharomyces pombe (strain 972 / ATCC 24843) (Fission yeast)).